The primary structure comprises 66 residues: Regulator of G-protein signaling 11 (66 aa).

Residues 1–66 enclose the RGS domain; that stretch reads EACEELRFGG…DAAQLHIYML (66 aa).

In terms of assembly, heterodimer with Gbeta5. Interacts with RGS7BP, leading to regulate the subcellular location of the heterodimer formed with Gbeta5.

Its function is as follows. Inhibits signal transduction by increasing the GTPase activity of G protein alpha subunits thereby driving them into their inactive GDP-bound form. In Rattus norvegicus (Rat), this protein is Regulator of G-protein signaling 11 (Rgs11).